The following is a 488-amino-acid chain: Bile acid receptor (488 aa).

A Glycyl lysine isopeptide (Lys-Gly) (interchain with G-Cter in SUMO1) cross-link involves residue Lys133. A DNA-binding region (nuclear receptor) is located at residues 135–210; the sequence is DELCVVCGDR…MGMLAECMYT (76 aa). Residues 138 to 158 form an NR C4-type zinc finger; it reads CVVCGDRASGYHYNALTCEGC. Ser146 and Ser165 each carry phosphoserine; by PKC/PRKCA. Lys168 carries the N6-acetyllysine; by EP300 modification. The segment at 174-198 adopts an NR C4-type zinc-finger fold; that stretch reads CKNGGNCVMDMYMRRKCQECRLRKC. Position 221 is an N6-methyllysine; by SETD7 (Lys221). Lys228 bears the N6-acetyllysine; by EP300 mark. One can recognise an NR LBD domain in the interval 264–488; sequence DQQTLLDYIM…PLLCEIWDVQ (225 aa). Lys291 is covalently cross-linked (Glycyl lysine isopeptide (Lys-Gly) (interchain with G-Cter in SUMO1)). Positions 347, 377, and 385 each coordinate chenodeoxycholate. Position 458 is a phosphothreonine; by PKC/PRKCZ (Thr458). Residue His463 coordinates chenodeoxycholate.

This sequence belongs to the nuclear hormone receptor family. NR1 subfamily. Heterodimer with RXRA; the heterodimerization enhances the binding affinity for LXXLL motifs from coactivators. Binds DNA predominantly as a heterodimer with RXRA. After activation by agonist binding interacts with coactivators. Interacts with PPARGC1A, SMARCA4 and EP300. Interacts with NCOA1, NCOA2, CARM1, SETD7, PRMT1, GPS2, SMARCA4 and MED1. Interacts with XRCC5 and XRCC6; decreasing NR1H4/FXR transactivation activity towards ABCB11/BSEP. Interacts with PAGR1 and NCOA6; indicative for an association with an MLL2/MLL3 complex (ASCOM). Interacts with NR5A2. Post-translationally, acetylated by EP300. Lys-228 as is the major acetylation site for EP300; the dynamicly regulated acetylation inhibits heterodimerization with RXRA and transactivation activity. Deacetylated by SIRT1. Elevated acetylation levels are found in metabolic disease states (mouse models of obesity and type II diabetes). In terms of processing, methylation may increase transactivation of target genes. Phosphorylation by PKC/PRKCA increases transactivation activity by promoting association with PPARGC1A. Post-translationally, sumoylated upon ligand binding. As to expression, expressed in liver and kidney. Expressed in pancreatic beta cells and macrophages. Expressed in the villus epithelium in adult ileum, with highest expression in the intervillus regions. Expression in colon is reduced by inflammation.

Its subcellular location is the nucleus. Its function is as follows. Ligand-activated transcription factor. Receptor for bile acids (BAs) such as chenodeoxycholic acid (CDCA), lithocholic acid, deoxycholic acid (DCA) and allocholic acid (ACA). Plays a essential role in BA homeostasis through the regulation of genes involved in BA synthesis, conjugation and enterohepatic circulation. Also regulates lipid and glucose homeostasis and is involved in innate immune response. The FXR-RXR heterodimer binds predominantly to farnesoid X receptor response elements (FXREs) containing two inverted repeats of the consensus sequence 5'-AGGTCA-3' in which the monomers are spaced by 1 nucleotide (IR-1) but also to tandem repeat DR1 sites with lower affinity, and can be activated by either FXR or RXR-specific ligands. It is proposed that monomeric nuclear receptors such as NR5A2/LRH-1 bound to coregulatory nuclear responsive element (NRE) halfsites located in close proximity to FXREs modulate transcriptional activity. In the liver activates transcription of the corepressor NR0B2 thereby indirectly inhibiting CYP7A1 and CYP8B1 (involved in BA synthesis) implicating at least in part histone demethylase KDM1A resulting in epigenomic repression, and SLC10A1/NTCP (involved in hepatic uptake of conjugated BAs). Activates transcription of the repressor MAFG (involved in regulation of BA synthesis). Activates transcription of SLC27A5/BACS and BAAT (involved in BA conjugation), ABCB11/BSEP (involved in bile salt export) by directly recruiting histone methyltransferase CARM1, and ABCC2/MRP2 (involved in secretion of conjugated BAs) and ABCB4 (involved in secretion of phosphatidylcholine in the small intestine). In ileal enterocytes activates FABP6/IBABP (involved in cytosolic transport), SLC51A/OSTA and SLC51B/OSTB (involved in secretion of conjugated BAs to the portal blood), and repressor NR0B2/SHP thereby indirectly inhibiting SLC10A2/ASBT (involved in BA uptake). In the intestine activates FGF15 expression and secretion leading to hepatic CYP7A1 repression; the function also involves the coordinated induction of hepatic KLB/beta-klotho expression. Transcriptional activation of FABP6/IBAP and SCD1 but not of ABCB11 is isoform-specific. Regulates transcription of liver UGT2B4 and SULT2A1 involved in BA detoxification; binding to the UGT2B4 promoter seems to imply a monomeric transactivation independent of RXRA. Modulates lipid homeostasis by activating liver NR0B2/SHP-mediated repression of SREBF1 isoform SREBP-1C (involved in de novo lipogenesis), expression of PLTP (involved in HDL formation), SCARB1 (involved in HDL hepatic uptake), APOE, APOC1, APOC4, VLDLR and SDC1 (involved in the hepatic uptake of LDL and IDL remnants), and inhibiting expression of MTTP (involved in VLDL assembly). Increases expression of APOC2 (promoting lipoprotein lipase activity implicated in triglyceride clearance). Transrepresses APOA1 probably involving a monomeric competition with NR2A1 for binding to a DR1 element. Also reduces triglyceride clearance by inhibiting expression of ANGPTL3 and APOC3 (both involved in inhibition of lipoprotein lipase). Involved in glucose homeostasis by modulating hepatic gluconeogenesis through activation of NR0B2/SHP-mediated repression of respective genes. Modulates glycogen synthesis (inducing phosphorylation of glycogen synthase kinase-3). Modulates glucose-stimulated insulin secretion and is involved in insulin resistance. Involved in intestinal innate immunity. Plays a role in protecting the distal small intestine against bacterial overgrowth and preservation of the epithelial barrier. Down-regulates inflammatory cytokine expression in several types of immune cells including macrophages and mononuclear cells. Mediates transrepression of TLR4-induced cytokine expression; the function seems to require its sumoylation and prevents N-CoR nuclear receptor corepressor clearance from target genes such as IL1B and NOS2. Involved in the TLR9-mediated protective mechanism in intestinal inflammation. Plays a anti-inflammatory role in liver inflammation; proposed to inhibit pro-inflammatory (but not antiapoptotic) NF-kappa-B signaling. Activates transcription of IBAP and SDC1. The protein is Bile acid receptor (Nr1h4) of Mus musculus (Mouse).